Reading from the N-terminus, the 386-residue chain is 8-amino-7-oxononanoate synthase (386 aa).

Arg-22 and Arg-29 together coordinate substrate. 109–110 (GY) lines the pyridoxal 5'-phosphate pocket. His-134 contributes to the substrate binding site. Pyridoxal 5'-phosphate-binding positions include Ser-182, 207–210 (DDAH), and 237–240 (TLSK). An N6-(pyridoxal phosphate)lysine modification is found at Lys-240. Thr-349 provides a ligand contact to substrate.

The protein belongs to the class-II pyridoxal-phosphate-dependent aminotransferase family. BioF subfamily. In terms of assembly, homodimer. Pyridoxal 5'-phosphate serves as cofactor.

The catalysed reaction is 6-carboxyhexanoyl-[ACP] + L-alanine + H(+) = (8S)-8-amino-7-oxononanoate + holo-[ACP] + CO2. Its pathway is cofactor biosynthesis; biotin biosynthesis. Functionally, catalyzes the decarboxylative condensation of pimeloyl-[acyl-carrier protein] and L-alanine to produce 8-amino-7-oxononanoate (AON), [acyl-carrier protein], and carbon dioxide. This chain is 8-amino-7-oxononanoate synthase, found in Beijerinckia indica subsp. indica (strain ATCC 9039 / DSM 1715 / NCIMB 8712).